A 165-amino-acid chain; its full sequence is Lipoprotein signal peptidase (165 aa).

The next 4 membrane-spanning stretches (helical) occupy residues 7 to 27 (YFSS…LVLL), 46 to 66 (AVTS…FSFL), 72 to 92 (WQRY…IYLL), and 100 to 120 (LFCW…IDRV). Catalysis depends on residues Asp-127 and Asp-145. The chain crosses the membrane as a helical span at residues 136–156 (WHWPAFNIADSAICIGAVLFI).

The protein belongs to the peptidase A8 family.

Its subcellular location is the cell inner membrane. The enzyme catalyses Release of signal peptides from bacterial membrane prolipoproteins. Hydrolyzes -Xaa-Yaa-Zaa-|-(S,diacylglyceryl)Cys-, in which Xaa is hydrophobic (preferably Leu), and Yaa (Ala or Ser) and Zaa (Gly or Ala) have small, neutral side chains.. It functions in the pathway protein modification; lipoprotein biosynthesis (signal peptide cleavage). Its function is as follows. This protein specifically catalyzes the removal of signal peptides from prolipoproteins. The protein is Lipoprotein signal peptidase of Janthinobacterium sp. (strain Marseille) (Minibacterium massiliensis).